Reading from the N-terminus, the 95-residue chain is HssA/B-like protein 45 (95 aa).

A disordered region spans residues 1–31 (MTLFSSISSISNPMTSSKSSIASFGSGTSMS).

The protein belongs to the hssA/B family.

In Dictyostelium discoideum (Social amoeba), this protein is HssA/B-like protein 45 (hssl45).